The chain runs to 357 residues: Histidinol-phosphate aminotransferase 2 (357 aa).

An N6-(pyridoxal phosphate)lysine modification is found at K216.

It belongs to the class-II pyridoxal-phosphate-dependent aminotransferase family. Histidinol-phosphate aminotransferase subfamily. In terms of assembly, homodimer. Pyridoxal 5'-phosphate serves as cofactor.

The enzyme catalyses L-histidinol phosphate + 2-oxoglutarate = 3-(imidazol-4-yl)-2-oxopropyl phosphate + L-glutamate. It functions in the pathway amino-acid biosynthesis; L-histidine biosynthesis; L-histidine from 5-phospho-alpha-D-ribose 1-diphosphate: step 7/9. This chain is Histidinol-phosphate aminotransferase 2, found in Idiomarina loihiensis (strain ATCC BAA-735 / DSM 15497 / L2-TR).